The following is a 153-amino-acid chain: Large ribosomal subunit protein bL9 (153 aa).

It belongs to the bacterial ribosomal protein bL9 family.

In terms of biological role, binds to the 23S rRNA. The sequence is that of Large ribosomal subunit protein bL9 from Gloeobacter violaceus (strain ATCC 29082 / PCC 7421).